The sequence spans 249 residues: MTLNINIDNFQGPFDLLLHLIRKNKMDIYDIKIFDITNQYIQYLNEMKEMDLEITSEFIVMAATLIEIKSKYLLPKTKEEEEEKEESDPTKELVSKLVEYKKFKLAADFLKNRELDYGEVFSKKPEIIDDRTEDADNKDILKDITLLDMYKLFEKLMEMYRSRINTNNSLPDKIAPDIYKIEDKMDEISEIIKSNKEIYFSNIINKCSNKIEVVVTFLALLELIKLKDIKVYQSNNFKDIYIERVSAVE.

It belongs to the ScpA family. Component of a cohesin-like complex composed of ScpA, ScpB and the Smc homodimer, in which ScpA and ScpB bind to the head domain of Smc. The presence of the three proteins is required for the association of the complex with DNA.

It localises to the cytoplasm. Functionally, participates in chromosomal partition during cell division. May act via the formation of a condensin-like complex containing Smc and ScpB that pull DNA away from mid-cell into both cell halves. In Clostridium acetobutylicum (strain ATCC 824 / DSM 792 / JCM 1419 / IAM 19013 / LMG 5710 / NBRC 13948 / NRRL B-527 / VKM B-1787 / 2291 / W), this protein is Segregation and condensation protein A.